Here is a 764-residue protein sequence, read N- to C-terminus: MASHNENDDIPMLPISDPSSRTRARAFTSRSRSVSLSNPTSSIEGFDTSTVVLGYTGPLRTQRRPPLVQMSGPLTSTRKHEPLFLPHPSSDSVGVSSQPERYPSFAALEHKNSSEDEFVLKHANLLRSGQLGMCNDPYCTTCPSYYNRKAAQIPTSRVSALFDSTFHNALYDDAKGWARRFASSVNRYLPGIMNPHAKEVQTWTKFFALSCLLAIFIDPLFFFLIKVQEQNKCIMIDWPMTKAFVAVRSVTDVIFTMNILLQFRLAYVARESTVVGAGQLVSHPKKIALHYLKGKFFLDLFIVMPLPQILILWIIPAHLGASGANYAKNLLRAAVLFQYIPKLYRLLPFLAGQTPTGFIFESAWANFVINLLTFMLAGHVVGSCWYLFGLQRVNQCLRNACGNFGRECQDLIDCGNGNSSVLVRATWKDNASANACFQEDGFPYGIYLKAVNLTNHSNLFTRYSYSLFWGFQQISTLAGNQVPSYFLGEVFFTMGIIGLGLLLFALLIGNMQNFLQALGKRNLEMTLRRRDVEQWMSHRRLPDGIRRRVREAERFNWAATRGVNEELLFENMPDDLQRDIRRHLFKFLKKVRIFSLMDEPILDAIRERLKQRTYIGSSTVLHRGGLVEKMVFIVRGEMESIGEDGSVLPLYEGDVCGEELLTWCLERSSVNPDGTRIRMPSKGLLSSRNVRCVTNVEAFSLSVADLEDVTSLFSRFLRSHRVQGAIRYDSPYWRLRAARQIQVAWRYRRRRLHRLCTPQSSYSL.

The transit peptide at 1-25 directs the protein to the chloroplast; that stretch reads MASHNENDDIPMLPISDPSSRTRAR. The interval 1–40 is disordered; sequence MASHNENDDIPMLPISDPSSRTRARAFTSRSRSVSLSNPT. The segment covering 19–33 has biased composition (low complexity); it reads SSRTRARAFTSRSRS. At 26 to 204 the chain is on the stromal side; the sequence is AFTSRSRSVS…PHAKEVQTWT (179 aa). The helical transmembrane segment at 205-225 threads the bilayer; the sequence is KFFALSCLLAIFIDPLFFFLI. The Lumenal portion of the chain corresponds to 226 to 242; it reads KVQEQNKCIMIDWPMTK. The chain crosses the membrane as a helical span at residues 243-263; that stretch reads AFVAVRSVTDVIFTMNILLQF. The Stromal portion of the chain corresponds to 264–295; that stretch reads RLAYVARESTVVGAGQLVSHPKKIALHYLKGK. Residues 296–316 traverse the membrane as a helical segment; the sequence is FFLDLFIVMPLPQILILWIIP. Residues 317-329 are Lumenal-facing; sequence AHLGASGANYAKN. The chain crosses the membrane as a helical span at residues 330-350; it reads LLRAAVLFQYIPKLYRLLPFL. At 351–366 the chain is on the stromal side; sequence AGQTPTGFIFESAWAN. The chain crosses the membrane as a helical span at residues 367-387; that stretch reads FVINLLTFMLAGHVVGSCWYL. Over 388–488 the chain is Lumenal; the sequence is FGLQRVNQCL…GNQVPSYFLG (101 aa). A helical membrane pass occupies residues 489–509; it reads EVFFTMGIIGLGLLLFALLIG. Residues 510 to 764 are Stromal-facing; the sequence is NMQNFLQALG…LCTPQSSYSL (255 aa). A nucleoside 3',5'-cyclic phosphate contacts are provided by residues 593-710 and Glu658; that span reads IFSL…EDVT. The segment at 713 to 729 is calmodulin-binding; the sequence is FSRFLRSHRVQGAIRYD. An IQ domain is found at 734-763; sequence RLRAARQIQVAWRYRRRRLHRLCTPQSSYS.

This sequence belongs to the cyclic nucleotide-gated cation channel (TC 1.A.1.5) family. In terms of assembly, homotetramer or heterotetramer.

The protein localises to the plastid. It is found in the chloroplast thylakoid membrane. Probable cyclic nucleotide-gated ion channel. The sequence is that of Probable cyclic nucleotide-gated ion channel 20, chloroplastic (CNGC20) from Arabidopsis thaliana (Mouse-ear cress).